A 314-amino-acid chain; its full sequence is Thymidylate synthase (314 aa).

DUMP contacts are provided by residues Arg21 and 176–177 (RR). Cys196 functions as the Nucleophile in the catalytic mechanism. Residues 216-219 (RSAD), Asn227, and 257-259 (HLY) each bind dUMP. A (6R)-5,10-methylene-5,6,7,8-tetrahydrofolate-binding site is contributed by Asp219. Ser313 contributes to the (6R)-5,10-methylene-5,6,7,8-tetrahydrofolate binding site.

Belongs to the thymidylate synthase family. Bacterial-type ThyA subfamily. As to quaternary structure, homodimer.

It is found in the cytoplasm. It catalyses the reaction dUMP + (6R)-5,10-methylene-5,6,7,8-tetrahydrofolate = 7,8-dihydrofolate + dTMP. It participates in pyrimidine metabolism; dTTP biosynthesis. Functionally, catalyzes the reductive methylation of 2'-deoxyuridine-5'-monophosphate (dUMP) to 2'-deoxythymidine-5'-monophosphate (dTMP) while utilizing 5,10-methylenetetrahydrofolate (mTHF) as the methyl donor and reductant in the reaction, yielding dihydrofolate (DHF) as a by-product. This enzymatic reaction provides an intracellular de novo source of dTMP, an essential precursor for DNA biosynthesis. The protein is Thymidylate synthase of Listeria monocytogenes serotype 4a (strain HCC23).